Here is a 416-residue protein sequence, read N- to C-terminus: Serine hydroxymethyltransferase (416 aa).

(6S)-5,6,7,8-tetrahydrofolate-binding positions include Leu-119 and 123 to 125 (GHL). Lys-228 carries the post-translational modification N6-(pyridoxal phosphate)lysine.

This sequence belongs to the SHMT family. In terms of assembly, homodimer. Pyridoxal 5'-phosphate is required as a cofactor.

It localises to the cytoplasm. The catalysed reaction is (6R)-5,10-methylene-5,6,7,8-tetrahydrofolate + glycine + H2O = (6S)-5,6,7,8-tetrahydrofolate + L-serine. It participates in one-carbon metabolism; tetrahydrofolate interconversion. Its pathway is amino-acid biosynthesis; glycine biosynthesis; glycine from L-serine: step 1/1. Catalyzes the reversible interconversion of serine and glycine with tetrahydrofolate (THF) serving as the one-carbon carrier. This reaction serves as the major source of one-carbon groups required for the biosynthesis of purines, thymidylate, methionine, and other important biomolecules. Also exhibits THF-independent aldolase activity toward beta-hydroxyamino acids, producing glycine and aldehydes, via a retro-aldol mechanism. The polypeptide is Serine hydroxymethyltransferase (Moorella thermoacetica (strain ATCC 39073 / JCM 9320)).